A 277-amino-acid chain; its full sequence is Elongation factor Ts (277 aa).

Positions 79–82 (TDFV) are involved in Mg(2+) ion dislocation from EF-Tu.

It belongs to the EF-Ts family.

It localises to the cytoplasm. In terms of biological role, associates with the EF-Tu.GDP complex and induces the exchange of GDP to GTP. It remains bound to the aminoacyl-tRNA.EF-Tu.GTP complex up to the GTP hydrolysis stage on the ribosome. This is Elongation factor Ts from Phytoplasma australiense.